The chain runs to 347 residues: Protein RecA (347 aa).

68-75 contacts ATP; the sequence is GPESSGKT.

This sequence belongs to the RecA family.

The protein resides in the cytoplasm. In terms of biological role, can catalyze the hydrolysis of ATP in the presence of single-stranded DNA, the ATP-dependent uptake of single-stranded DNA by duplex DNA, and the ATP-dependent hybridization of homologous single-stranded DNAs. It interacts with LexA causing its activation and leading to its autocatalytic cleavage. This Rhodococcus jostii (strain RHA1) protein is Protein RecA.